The primary structure comprises 794 residues: Phosphoribosylformylglycinamidine synthase subunit PurL (794 aa).

His-47 is an active-site residue. 2 residues coordinate ATP: Tyr-50 and Lys-89. Glu-91 is a binding site for Mg(2+). Substrate-binding positions include 92 to 95 (SHNH) and Arg-114. His-93 functions as the Proton acceptor in the catalytic mechanism. Residue Asp-115 coordinates Mg(2+). Gln-238 contacts substrate. Residue Asp-266 coordinates Mg(2+). Position 310–312 (310–312 (ESQ)) interacts with substrate. ATP contacts are provided by Asp-522 and Gly-559. Position 560 (Asn-560) interacts with Mg(2+). Position 562 (Ser-562) interacts with substrate.

Belongs to the FGAMS family. Monomer. Part of the FGAM synthase complex composed of 1 PurL, 1 PurQ and 2 PurS subunits.

It localises to the cytoplasm. It carries out the reaction N(2)-formyl-N(1)-(5-phospho-beta-D-ribosyl)glycinamide + L-glutamine + ATP + H2O = 2-formamido-N(1)-(5-O-phospho-beta-D-ribosyl)acetamidine + L-glutamate + ADP + phosphate + H(+). It participates in purine metabolism; IMP biosynthesis via de novo pathway; 5-amino-1-(5-phospho-D-ribosyl)imidazole from N(2)-formyl-N(1)-(5-phospho-D-ribosyl)glycinamide: step 1/2. Part of the phosphoribosylformylglycinamidine synthase complex involved in the purines biosynthetic pathway. Catalyzes the ATP-dependent conversion of formylglycinamide ribonucleotide (FGAR) and glutamine to yield formylglycinamidine ribonucleotide (FGAM) and glutamate. The FGAM synthase complex is composed of three subunits. PurQ produces an ammonia molecule by converting glutamine to glutamate. PurL transfers the ammonia molecule to FGAR to form FGAM in an ATP-dependent manner. PurS interacts with PurQ and PurL and is thought to assist in the transfer of the ammonia molecule from PurQ to PurL. The polypeptide is Phosphoribosylformylglycinamidine synthase subunit PurL (Prochlorococcus marinus (strain MIT 9313)).